The sequence spans 212 residues: Lipopolysaccharide core heptose(II)-phosphate phosphatase (212 aa).

A signal peptide spans 1–32 (MSIGGVYELAFCRSSLKSKKYFIILLALAAIA).

The protein belongs to the phosphoglycerate mutase family. Ais subfamily.

It localises to the periplasm. Its pathway is bacterial outer membrane biogenesis; lipopolysaccharide metabolism. In terms of biological role, catalyzes the dephosphorylation of heptose(II) of the outer membrane lipopolysaccharide core. This chain is Lipopolysaccharide core heptose(II)-phosphate phosphatase, found in Shigella boydii serotype 4 (strain Sb227).